We begin with the raw amino-acid sequence, 83 residues long: Short neurotoxin 1 (83 aa).

The N-terminal stretch at 1–21 (MKTLLLTLVVVTIVCLDLGYT) is a signal peptide. 4 cysteine pairs are disulfide-bonded: Cys-24–Cys-45, Cys-38–Cys-62, Cys-64–Cys-75, and Cys-76–Cys-81.

The protein belongs to the three-finger toxin family. Short-chain subfamily. Type I alpha-neurotoxin sub-subfamily. As to expression, expressed by the venom gland.

The protein resides in the secreted. Functionally, binds to muscle nicotinic acetylcholine receptor (nAChR) and inhibit acetylcholine from binding to the receptor, thereby impairing neuromuscular transmission. The polypeptide is Short neurotoxin 1 (Pseudechis australis (Mulga snake)).